A 354-amino-acid chain; its full sequence is MSLRKIIHVDCDCFYAAIEMRDDPRLAGRPMAVGGSPDHRGVIATCNYEARAYGVRSAMSSRHALKLCPDLLIVKPRFEAYREASREIHTIFRDYTELIEPLSLDEAYLDVSDSQWYSGSATRIAEDIRRRVARTLHITVSAGVAPNKFLAKIASDWRKPNGLFVITPNEVETFVAALPVARLHGVGKVTADKLTRLGIETCLHLREWSRLALVREFGSFGERLWGLARGIDERAVHNDSRRQSVSVENTYDTDLPDLASCLARLPDLLASLNERIARMDSSYLPDKPFVKVKFHDFSQTTMEQAGAGRDLESYRQLLGQAFARGGKPVRLLGVGVRLRDLRGAHEQLELFPPK.

Positions isoleucine 6–glycine 187 constitute a UmuC domain. Residues aspartate 10 and aspartate 105 each contribute to the Mg(2+) site. Glutamate 106 is a catalytic residue.

The protein belongs to the DNA polymerase type-Y family. In terms of assembly, monomer. It depends on Mg(2+) as a cofactor.

It localises to the cytoplasm. It catalyses the reaction DNA(n) + a 2'-deoxyribonucleoside 5'-triphosphate = DNA(n+1) + diphosphate. Its function is as follows. Poorly processive, error-prone DNA polymerase involved in untargeted mutagenesis. Copies undamaged DNA at stalled replication forks, which arise in vivo from mismatched or misaligned primer ends. These misaligned primers can be extended by PolIV. Exhibits no 3'-5' exonuclease (proofreading) activity. May be involved in translesional synthesis, in conjunction with the beta clamp from PolIII. This is DNA polymerase IV from Pseudomonas putida (strain ATCC 700007 / DSM 6899 / JCM 31910 / BCRC 17059 / LMG 24140 / F1).